Consider the following 301-residue polypeptide: Probable alpha-L-glutamate ligase (301 aa).

The ATP-grasp domain maps to 104–287; it reads LQLLSRRGIG…VAGMIIEHLE (184 aa). Residues lysine 141, 178-179, aspartate 187, and 211-213 each bind ATP; these read EY and RSN. 3 residues coordinate Mg(2+): aspartate 248, glutamate 260, and asparagine 262. Residues aspartate 248, glutamate 260, and asparagine 262 each coordinate Mn(2+).

Belongs to the RimK family. The cofactor is Mg(2+). Mn(2+) serves as cofactor.

This is Probable alpha-L-glutamate ligase from Pseudomonas entomophila (strain L48).